Here is a 412-residue protein sequence, read N- to C-terminus: MANVADTKLYDILGVPPGASENELKKAYRKLAKEYHPDKNPNAGDKFKEISFAYEVLSNPEKRELYDRYGEQGLREGSGGGGGMDDIFSHIFGGGLFGFMGNQSRSRNGRRRGEDMMHPLKVSLEDLYNGKTTKLQLSKNVLCSACSGQGGKSGAVQKCSACRGRGVRIMIRQLAPGMVQQMQSVCSDCNGEGEVINEKDRCKKCEGKKVIKEVKILEVHVDKGMKHGQRITFTGEADQAPGVEPGDIVLLLQEKEHEVFQRDGNDLHMTYKIGLVEALCGFQFTFKHLDGRQIVVKYPPGKVIEPGCVRVVRGEGMPQYRNPFEKGDLYIKFDVQFPENNWINPDKLSELEDLLPSRPEVPNIIGETEEVELQEFDSTRGSGGGQRREAYNDSSDEESSSHHGPGVQCAHQ.

Residues 8 to 70 form the J domain; the sequence is KLYDILGVPP…EKRELYDRYG (63 aa). An N6-acetyllysine modification is found at lysine 39. A phosphoserine mark is found at serine 78 and serine 123. The CR-type zinc-finger motif lies at 130–214; sequence GKTTKLQLSK…CEGKKVIKEV (85 aa). Lysine 134 is covalently cross-linked (Glycyl lysine isopeptide (Lys-Gly) (interchain with G-Cter in SUMO2)). Zn(2+) is bound by residues cysteine 143 and cysteine 146. The CXXCXGXG motif repeat unit spans residues 143–150; sequence CSACSGQG. Lysine 152 bears the N6-acetyllysine mark. 6 residues coordinate Zn(2+): cysteine 159, cysteine 162, cysteine 186, cysteine 189, cysteine 202, and cysteine 205. CXXCXGXG motif repeat units follow at residues 159 to 166, 186 to 193, and 202 to 209; these read CSACRGRG, CSDCNGEG, and CKKCEGKK. The tract at residues 365–412 is disordered; the sequence is IGETEEVELQEFDSTRGSGGGQRREAYNDSSDEESSSHHGPGVQCAHQ. A Phosphotyrosine modification is found at tyrosine 391. Residues serine 394 and serine 395 each carry the phosphoserine modification. Cysteine 409 carries the cysteine methyl ester modification. A lipid anchor (S-farnesyl cysteine) is attached at cysteine 409. Residues 410–412 constitute a propeptide, removed in mature form; that stretch reads AHQ.

It is found in the membrane. Its function is as follows. Co-chaperone of Hsc70. Stimulates ATP hydrolysis and the folding of unfolded proteins mediated by HSPA1A/B (in vitro). The protein is DnaJ homolog subfamily A member 2 (DNAJA2) of Homo sapiens (Human).